The chain runs to 520 residues: uncharacterized protein (520 aa).

9 helical membrane passes run 38 to 58 (VVLI…IPGG), 84 to 104 (IAIY…GIFN), 105 to 125 (IGIS…ILKV), 138 to 158 (IITV…VATL), 167 to 187 (VVSA…LVET), 220 to 240 (FGWL…AVVL), 271 to 291 (FLSF…VYTA), 318 to 338 (IAIG…SVLI), and 355 to 375 (ASLV…MVYF).

It localises to the cell membrane. This is an uncharacterized protein from Mycoplasma genitalium (strain ATCC 33530 / DSM 19775 / NCTC 10195 / G37) (Mycoplasmoides genitalium).